A 349-amino-acid polypeptide reads, in one-letter code: Phosphoribosylformylglycinamidine cyclo-ligase (349 aa).

It belongs to the AIR synthase family.

Its subcellular location is the cytoplasm. The catalysed reaction is 2-formamido-N(1)-(5-O-phospho-beta-D-ribosyl)acetamidine + ATP = 5-amino-1-(5-phospho-beta-D-ribosyl)imidazole + ADP + phosphate + H(+). The protein operates within purine metabolism; IMP biosynthesis via de novo pathway; 5-amino-1-(5-phospho-D-ribosyl)imidazole from N(2)-formyl-N(1)-(5-phospho-D-ribosyl)glycinamide: step 2/2. The protein is Phosphoribosylformylglycinamidine cyclo-ligase of Listeria monocytogenes serovar 1/2a (strain ATCC BAA-679 / EGD-e).